The primary structure comprises 403 residues: Serine/threonine transporter SstT (403 aa).

10 helical membrane-spanning segments follow: residues 15–35, 49–69, 85–105, 142–162, 183–203, 218–238, 246–268, 289–309, 317–337, and 362–382; these read LGLIPQIVIGIALGVGVAIVW, FISALKAVAPILVFLLVMTAI, LLYVVGTLCAALVAVLASFIF, ALLNANFVGILAWAMGLGMML, IVQLVIRCAPLGIFGLVAGTL, LAVIVGCMLFVALVTNPLIVF, YPLVFACLRGSAITAFFTRSSAA, ISIPLGATINMAGAAVTISVI, LGIGVDFATALLLCVVASLAA, and PDVAMQVVAIGFVISVVQDAT.

Belongs to the dicarboxylate/amino acid:cation symporter (DAACS) (TC 2.A.23) family.

It is found in the cell inner membrane. It carries out the reaction L-serine(in) + Na(+)(in) = L-serine(out) + Na(+)(out). It catalyses the reaction L-threonine(in) + Na(+)(in) = L-threonine(out) + Na(+)(out). Its function is as follows. Involved in the import of serine and threonine into the cell, with the concomitant import of sodium (symport system). The protein is Serine/threonine transporter SstT of Chromohalobacter salexigens (strain ATCC BAA-138 / DSM 3043 / CIP 106854 / NCIMB 13768 / 1H11).